A 347-amino-acid polypeptide reads, in one-letter code: NADH-ubiquinone oxidoreductase chain 2 (347 aa).

11 helical membrane-spanning segments follow: residues 3–23 (PMILLMLLITILSGTSIVMMS), 25–45 (HWFLTWLGFEMNMMAMIPVLM), 59–79 (YFLTQATASMILVLGIIINLI), 96–116 (TLLTIALVMKLGLAPFHFWVP), 122–142 (VSLNSGLILLTWQKIAPLSLL), 149–169 (VNTNILLVMSLLSIMVGGWGG), 178–198 (IMAYSSIAHMGWMIMIMIYNP), 201–221 (SLLNLLIYILMTSSMFMLLMF), 239–259 (IITTTILIILLSLGGLPPLSG), 274–294 (DSVILPAVMAILALLNLFFYM), and 326–346 (MTSLISISIMALPLTPLAMIL).

Belongs to the complex I subunit 2 family. In terms of assembly, core subunit of respiratory chain NADH dehydrogenase (Complex I) which is composed of 45 different subunits. Interacts with TMEM242.

The protein localises to the mitochondrion inner membrane. The catalysed reaction is a ubiquinone + NADH + 5 H(+)(in) = a ubiquinol + NAD(+) + 4 H(+)(out). Functionally, core subunit of the mitochondrial membrane respiratory chain NADH dehydrogenase (Complex I) which catalyzes electron transfer from NADH through the respiratory chain, using ubiquinone as an electron acceptor. Essential for the catalytic activity and assembly of complex I. The polypeptide is NADH-ubiquinone oxidoreductase chain 2 (Sylvisorex johnstoni (Johnston's forest shrew)).